The sequence spans 421 residues: METREIASQRRKNLYLGIELKKFLKYLGPAFIVSVAYVDPGNFATNISGGSLFDYHLIWVILWSNVIAIFLQIQSAKLGIATGYNLPEMCSIIFPRKWNWFLWITAELAAMATDLAEFLGGTMGLYLLFHIPMTYAAFLTGVVTFAIVYMEKYGQKVVEGIIFGLVAVISLAYAFELFIARPDWSKVLYHTFIPSIPNKDAMLIAVGILGATVMPHVIYLHSQLVQYRNKDGSLQAKKEHLKMEKIDILVAMNTAFIINAAMLIVSAAVFYKNGIVIESIEEAHKTLEPLLGVFSSWAFGIALLASGFSSSAVGTMAGQTIMKGFVGLNIPLNVRRLVTMVPAITIIALGIDPLKSLIVSQVVLSFELPMAIIPLLLITSNKKFMKEFADTPLERIMGVLVASFVMILNGLLLYLTLKGEV.

The next 11 helical transmembrane spans lie at 27–47 (LGPAFIVSVAYVDPGNFATNI), 51–71 (SLFDYHLIWVILWSNVIAIFL), 100–120 (WFLWITAELAAMATDLAEFLG), 128–148 (LFHIPMTYAAFLTGVVTFAIV), 160–180 (GIIFGLVAVISLAYAFELFIA), 201–221 (AMLIAVGILGATVMPHVIYLH), 248–268 (ILVAMNTAFIINAAMLIVSAA), 289–309 (PLLGVFSSWAFGIALLASGFS), 337–357 (LVTMVPAITIIALGIDPLKSL), 358–378 (IVSQVVLSFELPMAIIPLLLI), and 396–416 (IMGVLVASFVMILNGLLLYLT).

The protein belongs to the NRAMP family.

It localises to the cell membrane. H(+)-stimulated, divalent metal cation uptake system. The chain is Divalent metal cation transporter MntH from Caldanaerobacter subterraneus subsp. tengcongensis (strain DSM 15242 / JCM 11007 / NBRC 100824 / MB4) (Thermoanaerobacter tengcongensis).